The following is a 130-amino-acid chain: Transcription antitermination protein NusB (130 aa).

This sequence belongs to the NusB family.

Functionally, involved in transcription antitermination. Required for transcription of ribosomal RNA (rRNA) genes. Binds specifically to the boxA antiterminator sequence of the ribosomal RNA (rrn) operons. The protein is Transcription antitermination protein NusB of Bacillus cereus (strain B4264).